The following is a 200-amino-acid chain: Adenylate kinase (200 aa).

10 to 15 (GAGKGT) is an ATP binding site. Positions 30–59 (STGDMLRAAVAAETPVGLEAKAIMESGGLV) are NMP. AMP is bound by residues Thr-31, Arg-36, 57–59 (GLV), 85–88 (GFPR), and Gln-92. Residues 126–142 (KRAEETAARGQPVRKDD) form an LID region. Residue Arg-127 coordinates ATP. Positions 139 and 150 each coordinate AMP. Lys-178 is a binding site for ATP.

Belongs to the adenylate kinase family. Monomer.

The protein localises to the cytoplasm. The catalysed reaction is AMP + ATP = 2 ADP. It participates in purine metabolism; AMP biosynthesis via salvage pathway; AMP from ADP: step 1/1. In terms of biological role, catalyzes the reversible transfer of the terminal phosphate group between ATP and AMP. Plays an important role in cellular energy homeostasis and in adenine nucleotide metabolism. The sequence is that of Adenylate kinase from Methylorubrum extorquens (strain CM4 / NCIMB 13688) (Methylobacterium extorquens).